Consider the following 427-residue polypeptide: Imidazolonepropionase (427 aa).

Fe(3+)-binding residues include histidine 96 and histidine 98. Zn(2+) contacts are provided by histidine 96 and histidine 98. Residues arginine 105, tyrosine 168, and histidine 201 each coordinate 4-imidazolone-5-propanoate. Tyrosine 168 contributes to the N-formimidoyl-L-glutamate binding site. Histidine 265 contributes to the Fe(3+) binding site. Zn(2+) is bound at residue histidine 265. Residue glutamine 268 participates in 4-imidazolone-5-propanoate binding. Fe(3+) is bound at residue aspartate 340. Aspartate 340 provides a ligand contact to Zn(2+). Asparagine 342 and glycine 344 together coordinate N-formimidoyl-L-glutamate. Threonine 345 provides a ligand contact to 4-imidazolone-5-propanoate.

This sequence belongs to the metallo-dependent hydrolases superfamily. HutI family. Requires Zn(2+) as cofactor. It depends on Fe(3+) as a cofactor.

Its subcellular location is the cytoplasm. It catalyses the reaction 4-imidazolone-5-propanoate + H2O = N-formimidoyl-L-glutamate. It functions in the pathway amino-acid degradation; L-histidine degradation into L-glutamate; N-formimidoyl-L-glutamate from L-histidine: step 3/3. Catalyzes the hydrolytic cleavage of the carbon-nitrogen bond in imidazolone-5-propanoate to yield N-formimidoyl-L-glutamate. It is the third step in the universal histidine degradation pathway. The sequence is that of Imidazolonepropionase from Psychrobacter cryohalolentis (strain ATCC BAA-1226 / DSM 17306 / VKM B-2378 / K5).